Here is a 201-residue protein sequence, read N- to C-terminus: Hydroxymethylphosphonate dioxygenase (201 aa).

Fe cation is bound by residues H47, H71, D72, H94, H117, and D174.

Requires Fe(2+) as cofactor.

The catalysed reaction is hydroxymethylphosphonate + O2 = formate + phosphate + 2 H(+). The enzyme catalyses (1R)-(2-amino-1-hydroxyethyl)phosphonate + O2 = glycine + phosphate + 2 H(+). It carries out the reaction (1R)-(1-hydroxyethyl)phosphonate + O2 = acetate + phosphate + 2 H(+). Part of an oxidative pathway for utilization of methylphosphonic acid as a phosphate source. Catalyzes the oxidation of hydroxymethylphosphonic acid to produce formate and phosphate. Can also use (1R)-(2-amino-1-hydroxyethyl)phosphonic acid and (R)-1-hydroxyethylphosphonic acid with similar catalytic efficiency. In Gimesia maris (strain ATCC 29201 / DSM 8797 / 534-30) (Planctomyces maris), this protein is Hydroxymethylphosphonate dioxygenase.